Reading from the N-terminus, the 197-residue chain is Small ribosomal subunit protein uS4 (197 aa).

The 61-residue stretch at 87-147 folds into the S4 RNA-binding domain; the sequence is SRIDNVIFRL…ESKKNTQRMK (61 aa).

Belongs to the universal ribosomal protein uS4 family. Part of the 30S ribosomal subunit. Contacts protein S5. The interaction surface between S4 and S5 is involved in control of translational fidelity.

In terms of biological role, one of the primary rRNA binding proteins, it binds directly to 16S rRNA where it nucleates assembly of the body of the 30S subunit. Its function is as follows. With S5 and S12 plays an important role in translational accuracy. The sequence is that of Small ribosomal subunit protein uS4 from Agathobacter rectalis (strain ATCC 33656 / DSM 3377 / JCM 17463 / KCTC 5835 / VPI 0990) (Eubacterium rectale).